We begin with the raw amino-acid sequence, 491 residues long: MEKWWFNLILSNEELEHRCRLSKSMARPRPIGNTNGSQDPSINDRDKNGSDSGNYSFSNLDHLFDVKDNLSFIYDDTFLVRDSNGDSYSIYFDIENLIFEIDNDSFFLSKLESSFSNYLNSGSKNYNRYYDSYMYDTKYSWNNHINSYIDSYLCSEIRIDSYISSGIYNYSENYIYSYVWNGENVSTIKSRSSSIRTSANSSDINLKGRYNDFDINIKYRHLWVQCDNCYGLNYKKIFSSKMNICEQCGYHLKMSSSERIELSIDSGTWDPMNEDMVSTDPIEFHSEEEPYRDRIDSYQIKTGLTEAVQTGIGQLNGMPIAIGVMDFQFMGGSMGSVVGEKITRLIEYATNRSLPVIIVCASGGARMQEGSLSLMQMAKISSALYNYQLNKKLFYVSILTSPTTGGVTASFGMLGDIIIAEPNAYIAFAGKRVIEQTLNKTVPEGSQAAEYSFHKGLFDSIVPRNLLKGALSELLQLHGFFPLNHNSQVKR.

Residues 26 to 49 (ARPRPIGNTNGSQDPSINDRDKNG) form a disordered region. Residues 32 to 41 (GNTNGSQDPS) show a composition bias toward polar residues. One can recognise a CoA carboxyltransferase N-terminal domain in the interval 222–491 (LWVQCDNCYG…PLNHNSQVKR (270 aa)). Residues C226, C229, C245, and C248 each coordinate Zn(2+). The C4-type zinc finger occupies 226–248 (CDNCYGLNYKKIFSSKMNICEQC).

This sequence belongs to the AccD/PCCB family. As to quaternary structure, acetyl-CoA carboxylase is a heterohexamer composed of biotin carboxyl carrier protein, biotin carboxylase and 2 subunits each of ACCase subunit alpha and ACCase plastid-coded subunit beta (accD). The cofactor is Zn(2+).

It localises to the plastid. The protein localises to the chloroplast stroma. It catalyses the reaction N(6)-carboxybiotinyl-L-lysyl-[protein] + acetyl-CoA = N(6)-biotinyl-L-lysyl-[protein] + malonyl-CoA. Its pathway is lipid metabolism; malonyl-CoA biosynthesis; malonyl-CoA from acetyl-CoA: step 1/1. Its function is as follows. Component of the acetyl coenzyme A carboxylase (ACC) complex. Biotin carboxylase (BC) catalyzes the carboxylation of biotin on its carrier protein (BCCP) and then the CO(2) group is transferred by the transcarboxylase to acetyl-CoA to form malonyl-CoA. This Ceratophyllum demersum (Rigid hornwort) protein is Acetyl-coenzyme A carboxylase carboxyl transferase subunit beta, chloroplastic.